We begin with the raw amino-acid sequence, 60 residues long: Three-finger toxin MS3 (60 aa).

Cystine bridges form between Cys-3–Cys-22, Cys-15–Cys-39, Cys-41–Cys-52, and Cys-53–Cys-58.

Belongs to the three-finger toxin family. Short-chain subfamily. Type I alpha-neurotoxin sub-subfamily. As to expression, expressed by the venom gland.

The protein localises to the secreted. Functionally, produces peripheral paralysis by blocking neuromuscular transmission at the postsynaptic site. Binds to and inhibits the endogenous nicotinic acetylcholine receptors (nAChR) in human rhabdomyosarcoma TE 671 cell line with an IC(50) of 346 mM. This neurotoxin is lethal to mice by intraperitoneal injection and to zebrafish by injection at the back of the dorsolateral region. The chain is Three-finger toxin MS3 from Micrurus surinamensis (Surinam coral snake).